The chain runs to 116 residues: Protein Wnt-5a (116 aa).

S1 carries the O-palmitoleoyl serine; by PORCN lipid modification. N-linked (GlcNAc...) asparagine glycosylation is found at N69 and N83. An intrachain disulfide couples C82 to C97.

The protein belongs to the Wnt family. In terms of processing, palmitoleoylation is required for efficient binding to frizzled receptors. Depalmitoleoylation leads to Wnt signaling pathway inhibition.

It is found in the secreted. The protein resides in the extracellular space. It localises to the extracellular matrix. Its function is as follows. Ligand for members of the frizzled family of seven transmembrane receptors. Can activate or inhibit canonical Wnt signaling, depending on receptor context. Required during embryogenesis for extension of the primary anterior-posterior axis. The protein is Protein Wnt-5a (WNT5A) of Meleagris gallopavo (Wild turkey).